Here is a 522-residue protein sequence, read N- to C-terminus: Probable mannosyltransferase KTR5 (522 aa).

The Cytoplasmic segment spans residues 1 to 16 (MLLIRRTINAFLGCIH). Residues 17–37 (CNLTATCILIAFVITMYVVLV) form a helical; Signal-anchor for type II membrane protein membrane-spanning segment. Residues 38–82 (SEPASVDGTMGNFLPFSKMDLATKRDRPFYSNCVNTQDYLLNPSY) form a stem region region. Residues 38–522 (SEPASVDGTM…REDYLRQFGN (485 aa)) are Lumenal-facing. The segment at 83–522 (IKQNASFVML…REDYLRQFGN (440 aa)) is catalytic. A glycan (N-linked (GlcNAc...) asparagine) is linked at Asn-86. Glu-363 serves as the catalytic Nucleophile.

The protein belongs to the glycosyltransferase 15 family.

The protein resides in the membrane. Possible glycosyltransferase that transfers an alpha-D-mannosyl residue from GDP-mannose into lipid-linked oligosaccharide, forming an alpha-(1-&gt;2)-D-mannosyl-D-mannose linkage. The sequence is that of Probable mannosyltransferase KTR5 (KTR5) from Saccharomyces cerevisiae (strain ATCC 204508 / S288c) (Baker's yeast).